We begin with the raw amino-acid sequence, 138 residues long: ATP synthase epsilon chain (138 aa).

This sequence belongs to the ATPase epsilon chain family. In terms of assembly, F-type ATPases have 2 components, CF(1) - the catalytic core - and CF(0) - the membrane proton channel. CF(1) has five subunits: alpha(3), beta(3), gamma(1), delta(1), epsilon(1). CF(0) has three main subunits: a, b and c.

The protein resides in the cell membrane. Its function is as follows. Produces ATP from ADP in the presence of a proton gradient across the membrane. This chain is ATP synthase epsilon chain (atpC), found in Buchnera aphidicola subsp. Acyrthosiphon pisum (strain APS) (Acyrthosiphon pisum symbiotic bacterium).